A 353-amino-acid polypeptide reads, in one-letter code: Protein RecA (353 aa).

Residue 64–71 (GPESSGKT) coordinates ATP. A disordered region spans residues 331 to 353 (LEEASAQKEEVPVEDKLFDDELE). A compositionally biased stretch (basic and acidic residues) spans 335–346 (SAQKEEVPVEDK).

Belongs to the RecA family.

The protein resides in the cytoplasm. In terms of biological role, can catalyze the hydrolysis of ATP in the presence of single-stranded DNA, the ATP-dependent uptake of single-stranded DNA by duplex DNA, and the ATP-dependent hybridization of homologous single-stranded DNAs. It interacts with LexA causing its activation and leading to its autocatalytic cleavage. The sequence is that of Protein RecA from Macrococcus caseolyticus (strain JCSC5402) (Macrococcoides caseolyticum).